We begin with the raw amino-acid sequence, 322 residues long: Peroxisomal adenine nucleotide carrier 1 (322 aa).

Solcar repeat units lie at residues 5–94 (LESV…FKRV), 104–184 (IGTK…LKQH), and 202–298 (LSAF…ITAT). A run of 6 helical transmembrane segments spans residues 8-28 (VSEA…LYPL), 104-124 (IGTK…SVLI), 158-178 (FDGL…YTVF), 201-221 (VLSA…ATVL), 254-274 (IPGV…FKGL), and 286-306 (ALLL…ILAI).

This sequence belongs to the mitochondrial carrier (TC 2.A.29) family. Expressed in stamens, pollen grains, seeds, leaves, cotyledons, roots, stems, flowers, hypocotyls and siliques.

Its subcellular location is the peroxisome membrane. Its function is as follows. Peroxisomal adenine nucleotide transporter catalyzing the counterexchange of ATP with AMP. ATP is needed by reactions that generate acyl-CoA for peroxisomal fatty acid beta-oxidation during postgerminative growth. Required for the beta-oxidation reactions involved in auxin biosynthesis and for the conversion of seed-reserved triacylglycerols into sucrose that is necessary for growth before the onset of photosynthesis. This Arabidopsis thaliana (Mouse-ear cress) protein is Peroxisomal adenine nucleotide carrier 1 (PNC1).